The following is a 153-amino-acid chain: Regulator of sigma D (153 aa).

It belongs to the Rsd/AlgQ family. In terms of assembly, interacts with RpoD.

The protein localises to the cytoplasm. In terms of biological role, binds RpoD and negatively regulates RpoD-mediated transcription activation by preventing the interaction between the primary sigma factor RpoD with the catalytic core of the RNA polymerase and with promoter DNA. May be involved in replacement of the RNA polymerase sigma subunit from RpoD to RpoS during the transition from exponential growth to the stationary phase. The protein is Regulator of sigma D of Pectobacterium carotovorum subsp. carotovorum (strain PC1).